We begin with the raw amino-acid sequence, 211 residues long: Adenylate kinase (211 aa).

13-18 (GAGKGT) is a binding site for ATP. The interval 33–62 (STGDILRVAVANKTKLGLEAKKFMDAGQLV) is NMP. AMP is bound by residues Thr34, Arg39, 60-62 (QLV), 88-91 (GFPR), and Gln95. Residues 129 to 161 (GRRTSKVTGKIYHIKFNPPVDEKPEDLVQRADD) form an LID region. ATP is bound by residues Arg130 and 139–140 (IY). Residues Arg158 and Arg169 each contribute to the AMP site. Residue Lys197 coordinates ATP.

This sequence belongs to the adenylate kinase family. Monomer.

The protein localises to the cytoplasm. The enzyme catalyses AMP + ATP = 2 ADP. Its pathway is purine metabolism; AMP biosynthesis via salvage pathway; AMP from ADP: step 1/1. Catalyzes the reversible transfer of the terminal phosphate group between ATP and AMP. Plays an important role in cellular energy homeostasis and in adenine nucleotide metabolism. This is Adenylate kinase from Fusobacterium nucleatum subsp. nucleatum (strain ATCC 25586 / DSM 15643 / BCRC 10681 / CIP 101130 / JCM 8532 / KCTC 2640 / LMG 13131 / VPI 4355).